The primary structure comprises 444 residues: Probable D-serine dehydratase (444 aa).

An N6-(pyridoxal phosphate)lysine modification is found at Lys118.

It belongs to the serine/threonine dehydratase family. DsdA subfamily. Pyridoxal 5'-phosphate serves as cofactor.

It carries out the reaction D-serine = pyruvate + NH4(+). This chain is Probable D-serine dehydratase, found in Acinetobacter baumannii (strain ATCC 17978 / DSM 105126 / CIP 53.77 / LMG 1025 / NCDC KC755 / 5377).